We begin with the raw amino-acid sequence, 423 residues long: Serine--tRNA ligase (423 aa).

An L-serine-binding site is contributed by 229–231; sequence TAE. Residue 260-262 participates in ATP binding; that stretch reads RKE. E283 contacts L-serine. Position 347-350 (347-350) interacts with ATP; the sequence is EVSS. Residue S383 coordinates L-serine.

This sequence belongs to the class-II aminoacyl-tRNA synthetase family. Type-1 seryl-tRNA synthetase subfamily. Homodimer. The tRNA molecule binds across the dimer.

It localises to the cytoplasm. The catalysed reaction is tRNA(Ser) + L-serine + ATP = L-seryl-tRNA(Ser) + AMP + diphosphate + H(+). The enzyme catalyses tRNA(Sec) + L-serine + ATP = L-seryl-tRNA(Sec) + AMP + diphosphate + H(+). It participates in aminoacyl-tRNA biosynthesis; selenocysteinyl-tRNA(Sec) biosynthesis; L-seryl-tRNA(Sec) from L-serine and tRNA(Sec): step 1/1. Catalyzes the attachment of serine to tRNA(Ser). Is also able to aminoacylate tRNA(Sec) with serine, to form the misacylated tRNA L-seryl-tRNA(Sec), which will be further converted into selenocysteinyl-tRNA(Sec). This chain is Serine--tRNA ligase, found in Chloroflexus aurantiacus (strain ATCC 29366 / DSM 635 / J-10-fl).